Consider the following 761-residue polypeptide: Neutral ceramidase (761 aa).

Over 1-11 the chain is Cytoplasmic; that stretch reads MAKRTFSSLEA. A helical; Signal-anchor for type II membrane protein transmembrane segment spans residues 12 to 32; it reads FLIFLLVMMTAITVALLTLLF. The Lumenal portion of the chain corresponds to 33 to 761; that stretch reads VTSGTIENHK…ISSPFEIVTT (729 aa). The disordered stretch occupies residues 43 to 76; it reads DSGNHWVSTTQGPTTTQSSPTTQTPTTQTPDLPP. Residues 50-76 show a composition bias toward low complexity; the sequence is STTQGPTTTQSSPTTQTPTTQTPDLPP. Residues T51, T52, T56, T57, and T58 are each glycosylated (O-linked (GalNAc...) threonine). Residues S60 and S61 are each glycosylated (O-linked (GalNAc...) serine). 6 O-linked (GalNAc...) threonine glycosylation sites follow: T63, T64, T66, T68, T69, and T71. L115 contacts Ca(2+). H175 is a binding site for Zn(2+). The N-linked (GlcNAc...) asparagine glycan is linked to N198. H284 is a Zn(2+) binding site. S335 functions as the Nucleophile in the catalytic mechanism. Cystine bridges form between C343–C357 and C350–C365. 2 N-linked (GlcNAc...) asparagine glycosylation sites follow: N412 and N449. A disulfide bond links C429 and C479. Positions 521 and 560 each coordinate Zn(2+). Positions 693, 695, and 698 each coordinate Ca(2+). Residues 751-761 form a required for correct folding and localization region; the sequence is GISSPFEIVTT.

The protein belongs to the neutral ceramidase family. Zn(2+) serves as cofactor. Proteolytic cleavage of the N-terminus removes the signal-anchor and produces a soluble form of the protein. Post-translationally, N-glycosylated. Required for enzyme activity. In terms of processing, O-glycosylated. Required to retain it as a type II membrane protein at the cell surface. Phosphorylated. May prevent ubiquitination and subsequent degradation. Post-translationally, ubiquitinated, leading to its degradation by the proteasome. Ubiquitination is triggered by nitric oxide. Highly expressed in brain, kidney and heart. Expressed at lower level in other tissues such as liver. Expressed in intestine, kidney and liver (at protein level). Localizes in the epithelia of the jejunum and ileum.

The protein localises to the cell membrane. The protein resides in the membrane raft. It is found in the membrane. It localises to the caveola. Its subcellular location is the golgi apparatus membrane. The protein localises to the mitochondrion. The protein resides in the secreted. It is found in the extracellular exosome. It carries out the reaction an N-acylsphing-4-enine + H2O = sphing-4-enine + a fatty acid. It catalyses the reaction N-hexadecanoylsphing-4-enine + H2O = sphing-4-enine + hexadecanoate. The enzyme catalyses N-tetradecanoylsphing-4-enine + H2O = tetradecanoate + sphing-4-enine. The catalysed reaction is N-(9Z-octadecenoyl)-sphing-4-enine + H2O = sphing-4-enine + (9Z)-octadecenoate. It carries out the reaction N-(15Z-tetracosenoyl)-sphing-4-enine + H2O = (15Z)-tetracosenoate + sphing-4-enine. It catalyses the reaction N-octanoylsphing-4-enine + H2O = octanoate + sphing-4-enine. The enzyme catalyses N-dodecanoylsphing-4-enine + H2O = dodecanoate + sphing-4-enine. The catalysed reaction is N-(hexanoyl)sphing-4-enine + H2O = hexanoate + sphing-4-enine. It carries out the reaction N-octadecanoylsphing-4-enine + H2O = sphing-4-enine + octadecanoate. It catalyses the reaction sphinganine + hexadecanoate = N-hexadecanoylsphinganine + H2O. The enzyme catalyses N-(octadecanoyl)-sphinganine + H2O = sphinganine + octadecanoate. Its pathway is lipid metabolism; sphingolipid metabolism. The reverse reaction is inhibited by Zn(2+) and Cu(2+). Inhibited by cardiolipin and phosphatidic acid. Its function is as follows. Plasma membrane ceramidase that hydrolyzes sphingolipid ceramides into sphingosine and free fatty acids at neutral pH. Ceramides, sphingosine, and its phosphorylated form sphingosine-1-phosphate are bioactive lipids that mediate cellular signaling pathways regulating several biological processes including cell proliferation, apoptosis and differentiation. Also catalyzes the reverse reaction allowing the synthesis of ceramides from fatty acids and sphingosine. Together with sphingomyelinase, participates in the production of sphingosine and sphingosine-1-phosphate from the degradation of sphingomyelin, a sphingolipid enriched in the plasma membrane of cells. Also participates in the hydrolysis of ceramides from the extracellular milieu allowing the production of sphingosine-1-phosphate inside and outside cells. This is the case for instance with the digestion of dietary sphingolipids in the intestinal tract. In Rattus norvegicus (Rat), this protein is Neutral ceramidase (Asah2).